The sequence spans 519 residues: AAA-ATPase At4g30250 (519 aa).

Residues 1-24 (MSDYWTTMASLLGMLAFCQTIVQL) form the signal peptide. ATP is bound at residue 252–259 (GPPGTGKS). Disordered stretches follow at residues 315 to 335 (GKNK…NGSG) and 467 to 519 (KSVG…EKEK). Acidic residues predominate over residues 479 to 488 (QEEEEEAEEE). Residues 489–508 (QEKRALDSPNRRNREVCGFR) show a composition bias toward basic and acidic residues. The segment covering 509–519 (EEEEEEDEKEK) has biased composition (acidic residues).

It belongs to the AAA ATPase family. BCS1 subfamily. It depends on Mg(2+) as a cofactor.

The enzyme catalyses ATP + H2O = ADP + phosphate + H(+). In Arabidopsis thaliana (Mouse-ear cress), this protein is AAA-ATPase At4g30250.